Reading from the N-terminus, the 402-residue chain is Renin (402 aa).

A signal peptide spans 1 to 26; that stretch reads MGGRRMPLWALLLLWTSCSFSLPTDT. Positions 27-64 are cleaved as a propeptide — activation peptide; sequence ASFGRILLKKMPSVREILEERGVDMTRISAEWGEFIKK. Asparagine 69 carries N-linked (GlcNAc...) asparagine glycosylation. The region spanning 84 to 399 is the Peptidase A1 domain; it reads YYGEIGIGTP…DRHNNRIGFA (316 aa). The active site involves aspartate 102. A disulfide bond links cysteine 115 and cysteine 122. Residue asparagine 139 is glycosylated (N-linked (GlcNAc...) asparagine). A disulfide bridge connects residues cysteine 278 and cysteine 282. Residue aspartate 287 is part of the active site. The N-linked (GlcNAc...) asparagine glycan is linked to asparagine 320. An intrachain disulfide couples cysteine 321 to cysteine 358.

This sequence belongs to the peptidase A1 family. Interacts with ATP6AP2.

The protein resides in the secreted. Its subcellular location is the membrane. It catalyses the reaction Cleavage of Leu-|-Xaa bond in angiotensinogen to generate angiotensin I.. Interaction with ATP6AP2 results in a 5-fold increased efficiency in angiotensinogen processing. Its function is as follows. Renin is a highly specific endopeptidase, whose only known function is to generate angiotensin I from angiotensinogen in the plasma, initiating a cascade of reactions that produce an elevation of blood pressure and increased sodium retention by the kidney. This chain is Renin (Ren1), found in Rattus norvegicus (Rat).